Consider the following 266-residue polypeptide: Segregation and condensation protein A (266 aa).

Belongs to the ScpA family. As to quaternary structure, component of a cohesin-like complex composed of ScpA, ScpB and the Smc homodimer, in which ScpA and ScpB bind to the head domain of Smc. The presence of the three proteins is required for the association of the complex with DNA.

The protein localises to the cytoplasm. In terms of biological role, participates in chromosomal partition during cell division. May act via the formation of a condensin-like complex containing Smc and ScpB that pull DNA away from mid-cell into both cell halves. The sequence is that of Segregation and condensation protein A from Coxiella burnetii (strain RSA 493 / Nine Mile phase I).